The sequence spans 273 residues: NAD-dependent protein deacylase (273 aa).

In terms of domain architecture, Deacetylase sirtuin-type spans 20–272; the sequence is RERLRQRIFF…PEFVEKLLKG (253 aa). 48-67 is an NAD(+) binding site; the sequence is GAGISAESGIRTFRAADGLW. Substrate contacts are provided by Y92 and R95. An NAD(+)-binding site is contributed by 129 to 132; that stretch reads QNID. Residue H147 is the Proton acceptor of the active site. 2 residues coordinate Zn(2+): C155 and C174. NAD(+) is bound by residues 214–216, 240–242, and A258; these read GTS and NLE.

Belongs to the sirtuin family. Class III subfamily. Zn(2+) is required as a cofactor.

It localises to the cytoplasm. The enzyme catalyses N(6)-acetyl-L-lysyl-[protein] + NAD(+) + H2O = 2''-O-acetyl-ADP-D-ribose + nicotinamide + L-lysyl-[protein]. It catalyses the reaction N(6)-succinyl-L-lysyl-[protein] + NAD(+) + H2O = 2''-O-succinyl-ADP-D-ribose + nicotinamide + L-lysyl-[protein]. It carries out the reaction N(6)-(2-hydroxyisobutanoyl)-L-lysyl-[protein] + NAD(+) + H2O = 2''-O-(2-hydroxyisobutanoyl)-ADP-D-ribose + nicotinamide + L-lysyl-[protein]. Functionally, NAD-dependent lysine deacetylase that specifically removes acetyl groups on target proteins. Also acts as a protein-lysine deacylase by mediating protein desuccinylation and de-2-hydroxyisobutyrylation. Modulates the activities of several proteins which are inactive in their acylated form. This Escherichia coli O157:H7 protein is NAD-dependent protein deacylase.